A 208-amino-acid polypeptide reads, in one-letter code: Uracil phosphoribosyltransferase (208 aa).

Residues arginine 78, arginine 103, and 130–138 (DPMLATGGS) each bind 5-phospho-alpha-D-ribose 1-diphosphate. Uracil contacts are provided by residues isoleucine 193 and 198–200 (GDA). 5-phospho-alpha-D-ribose 1-diphosphate is bound at residue aspartate 199.

It belongs to the UPRTase family. The cofactor is Mg(2+).

The catalysed reaction is UMP + diphosphate = 5-phospho-alpha-D-ribose 1-diphosphate + uracil. Its pathway is pyrimidine metabolism; UMP biosynthesis via salvage pathway; UMP from uracil: step 1/1. Allosterically activated by GTP. Catalyzes the conversion of uracil and 5-phospho-alpha-D-ribose 1-diphosphate (PRPP) to UMP and diphosphate. The protein is Uracil phosphoribosyltransferase of Colwellia psychrerythraea (strain 34H / ATCC BAA-681) (Vibrio psychroerythus).